The primary structure comprises 140 residues: Sex-regulated protein janus-B (140 aa).

R42 provides a ligand contact to substrate. H69 serves as the catalytic Proton acceptor. 110–112 (CKT) is a substrate binding site.

It belongs to the janus family.

JanA and janB regulate somatic sex differentiation. This Drosophila pseudoobscura pseudoobscura (Fruit fly) protein is Sex-regulated protein janus-B (janB).